A 72-amino-acid chain; its full sequence is Teretoxin Tsu11.2 (72 aa).

The N-terminal stretch at 1–21 is a signal peptide; sequence MMAKATMAFCFLLMLTTVMLP. Residues 22–30 constitute a propeptide that is removed on maturation; it reads TEGKTIAGR.

The protein belongs to the teretoxin H (TH) superfamily. Contains 4 disulfide bonds. As to expression, expressed by the venom duct.

The protein localises to the secreted. The protein is Teretoxin Tsu11.2 of Terebra subulata (Chocolate spotted auger).